A 168-amino-acid chain; its full sequence is Vasopressin-neurophysin 2-copeptin (168 aa).

Residues 1–23 (MLAMMLNTTLSACFLSLLALTSA) form the signal peptide. An intrachain disulfide couples cysteine 24 to cysteine 29. Glycine 32 is modified (glycine amide). 7 cysteine pairs are disulfide-bonded: cysteine 45–cysteine 89, cysteine 48–cysteine 62, cysteine 56–cysteine 79, cysteine 63–cysteine 69, cysteine 96–cysteine 108, cysteine 102–cysteine 120, and cysteine 109–cysteine 114. Residue asparagine 135 is glycosylated (N-linked (GlcNAc...) asparagine).

It belongs to the vasopressin/oxytocin family. In terms of assembly, interacts with vasopressin receptors V1bR/AVPR1B (Ki=85 pM), V1aR/AVPR1A (Ki=0.6 nM) and V2R/AVPR2 (Ki=4.9 nM). Interacts with oxytocin receptor (OXTR) (Ki=110 nM).

The protein localises to the secreted. Neurophysin 2 specifically binds vasopressin. In terms of biological role, vasopressin has a direct antidiuretic action on the kidney, it also causes vasoconstriction of the peripheral vessels. Acts by binding to vasopressin receptors (V1bR/AVPR1B, V1aR/AVPR1A, and V2R/AVPR2). The chain is Vasopressin-neurophysin 2-copeptin (Avp) from Rattus norvegicus (Rat).